The following is a 651-amino-acid chain: Acetyl-coenzyme A synthetase (651 aa).

CoA contacts are provided by residues 193–196 (RRGK) and Thr312. ATP is bound by residues 388–390 (GEP), 412–417 (DTWWQT), Asp501, and Arg516. Ser524 is a binding site for CoA. Residues Val538, His540, and Val543 each coordinate Mg(2+). N6-acetyllysine is present on Lys610.

It belongs to the ATP-dependent AMP-binding enzyme family. Mg(2+) serves as cofactor. Acetylated. Deacetylation by the SIR2-homolog deacetylase activates the enzyme.

The catalysed reaction is acetate + ATP + CoA = acetyl-CoA + AMP + diphosphate. Its function is as follows. Catalyzes the conversion of acetate into acetyl-CoA (AcCoA), an essential intermediate at the junction of anabolic and catabolic pathways. AcsA undergoes a two-step reaction. In the first half reaction, AcsA combines acetate with ATP to form acetyl-adenylate (AcAMP) intermediate. In the second half reaction, it can then transfer the acetyl group from AcAMP to the sulfhydryl group of CoA, forming the product AcCoA. This chain is Acetyl-coenzyme A synthetase, found in Streptomyces coelicolor (strain ATCC BAA-471 / A3(2) / M145).